A 281-amino-acid chain; its full sequence is NADPH-dependent 7-cyano-7-deazaguanine reductase (281 aa).

Ile87–Ser89 serves as a coordination point for substrate. An NADPH-binding site is contributed by Ser89 to Lys90. Cys188 functions as the Thioimide intermediate in the catalytic mechanism. Asp195 acts as the Proton donor in catalysis. A substrate-binding site is contributed by His227 to Glu228. Arg256–Gly257 lines the NADPH pocket. The interval Ile261–Gln281 is disordered. The segment covering Glu268–Gln281 has biased composition (basic and acidic residues).

This sequence belongs to the GTP cyclohydrolase I family. QueF type 2 subfamily. As to quaternary structure, homodimer.

The protein localises to the cytoplasm. The catalysed reaction is 7-aminomethyl-7-carbaguanine + 2 NADP(+) = 7-cyano-7-deazaguanine + 2 NADPH + 3 H(+). It functions in the pathway tRNA modification; tRNA-queuosine biosynthesis. Catalyzes the NADPH-dependent reduction of 7-cyano-7-deazaguanine (preQ0) to 7-aminomethyl-7-deazaguanine (preQ1). This Vibrio vulnificus (strain YJ016) protein is NADPH-dependent 7-cyano-7-deazaguanine reductase.